The chain runs to 362 residues: Ciliary neurotrophic factor receptor subunit alpha (362 aa).

The first 19 residues, 1-19, serve as a signal peptide directing secretion; it reads MANPVPSACCVVLAAVVVV. The Ig-like C2-type domain occupies 23–103; the sequence is RHSQQDSHIQ…HLKYQTYLRV (81 aa). Cys44 and Cys87 are joined by a disulfide. N-linked (GlcNAc...) asparagine glycans are attached at residues Asn58, Asn68, Asn140, and Asn188. Fibronectin type-III domains follow at residues 106–203 and 204–304; these read PPKE…VKPD and PPES…TEEP. The short motif at 288 to 292 is the WSXWS motif element; it reads WSDWS. Residue Asp334 is the site of GPI-anchor amidated aspartate attachment. Positions 335 to 362 are cleaved as a propeptide — removed in mature form; it reads KGAGVGSGAVAVCWTAGLVLAAYGVLFI.

The protein belongs to the type I cytokine receptor family. Type 3 subfamily. In terms of assembly, heterotrimer of the alpha subunit, LIFR and IL6ST. As to expression, highly expressed in nervous system. Also found in skeletal muscle.

The protein resides in the cell membrane. Its function is as follows. Binds to CNTF (GPA). The alpha subunit provides the receptor specificity. This Gallus gallus (Chicken) protein is Ciliary neurotrophic factor receptor subunit alpha (CNTFR).